The sequence spans 197 residues: Ras-like protein rasB (197 aa).

GTP is bound at residue 13–20 (GGGGVGKS). Residues 35-43 (YDPTIEDSY) carry the Effector region motif. GTP is bound by residues 60 to 64 (DTAGQ) and 119 to 122 (NKCD). Residue C194 is modified to Cysteine methyl ester. C194 carries S-geranylgeranyl cysteine lipidation. Residues 195-197 (LIL) constitute a propeptide, removed in mature form.

This sequence belongs to the small GTPase superfamily. Ras family.

Its subcellular location is the cell membrane. It catalyses the reaction GTP + H2O = GDP + phosphate + H(+). With respect to regulation, alternates between an inactive form bound to GDP and an active form bound to GTP. Activated by a guanine nucleotide-exchange factor (GEF) and inactivated by a GTPase-activating protein (GAP). Ras proteins bind GDP/GTP and possess intrinsic GTPase activity. The polypeptide is Ras-like protein rasB (rasB) (Dictyostelium discoideum (Social amoeba)).